A 255-amino-acid chain; its full sequence is Uracil-DNA glycosylase (255 aa).

D93 acts as the Proton acceptor in catalysis.

It belongs to the uracil-DNA glycosylase (UDG) superfamily. UNG family.

It localises to the host nucleus. The catalysed reaction is Hydrolyzes single-stranded DNA or mismatched double-stranded DNA and polynucleotides, releasing free uracil.. Excises uracil residues from the DNA which can arise as a result of misincorporation of dUMP residues by DNA polymerase or deamination of cytosines. Therefore may reduce deleterious uracil incorporation into the viral genome, particularly in terminally differentiated cells which lack DNA repair enzymes. The protein is Uracil-DNA glycosylase (U81) of Human herpesvirus 6A (strain Uganda-1102) (HHV-6 variant A).